An 801-amino-acid chain; its full sequence is Phenylalanine--tRNA ligase beta subunit (801 aa).

The tRNA-binding domain maps to A39–F153. A B5 domain is found at T406 to T481. Residues D459, D465, E468, and E469 each contribute to the Mg(2+) site. The region spanning T708–R801 is the FDX-ACB domain.

It belongs to the phenylalanyl-tRNA synthetase beta subunit family. Type 1 subfamily. As to quaternary structure, tetramer of two alpha and two beta subunits. Mg(2+) serves as cofactor.

The protein resides in the cytoplasm. The catalysed reaction is tRNA(Phe) + L-phenylalanine + ATP = L-phenylalanyl-tRNA(Phe) + AMP + diphosphate + H(+). This Streptococcus agalactiae serotype Ia (strain ATCC 27591 / A909 / CDC SS700) protein is Phenylalanine--tRNA ligase beta subunit.